Consider the following 261-residue polypeptide: Ribonuclease HII (261 aa).

Over residues 1 to 20 (MIRDKSAKRPAKDAPKKAAV) the composition is skewed to basic and acidic residues. The tract at residues 1–23 (MIRDKSAKRPAKDAPKKAAVKEA) is disordered. The RNase H type-2 domain maps to 42–230 (WPVAGCDEAG…VAAARAKHMP (189 aa)). Asp48, Glu49, and Asp139 together coordinate a divalent metal cation.

Belongs to the RNase HII family. Mn(2+) serves as cofactor. Requires Mg(2+) as cofactor.

The protein resides in the cytoplasm. It carries out the reaction Endonucleolytic cleavage to 5'-phosphomonoester.. In terms of biological role, endonuclease that specifically degrades the RNA of RNA-DNA hybrids. The protein is Ribonuclease HII of Bradyrhizobium diazoefficiens (strain JCM 10833 / BCRC 13528 / IAM 13628 / NBRC 14792 / USDA 110).